The chain runs to 308 residues: Aspartate carbamoyltransferase catalytic subunit (308 aa).

Carbamoyl phosphate contacts are provided by Arg55 and Thr56. Lys83 contributes to the L-aspartate binding site. Residues Arg105, His133, and Gln136 each coordinate carbamoyl phosphate. L-aspartate is bound by residues Arg166 and Arg220. The carbamoyl phosphate site is built by Gly261 and Pro262.

Belongs to the aspartate/ornithine carbamoyltransferase superfamily. ATCase family. In terms of assembly, heterododecamer (2C3:3R2) of six catalytic PyrB chains organized as two trimers (C3), and six regulatory PyrI chains organized as three dimers (R2).

The catalysed reaction is carbamoyl phosphate + L-aspartate = N-carbamoyl-L-aspartate + phosphate + H(+). Its pathway is pyrimidine metabolism; UMP biosynthesis via de novo pathway; (S)-dihydroorotate from bicarbonate: step 2/3. In terms of biological role, catalyzes the condensation of carbamoyl phosphate and aspartate to form carbamoyl aspartate and inorganic phosphate, the committed step in the de novo pyrimidine nucleotide biosynthesis pathway. The sequence is that of Aspartate carbamoyltransferase catalytic subunit from Chlorobium limicola (strain DSM 245 / NBRC 103803 / 6330).